We begin with the raw amino-acid sequence, 227 residues long: Phosphoribosylformylglycinamidine synthase subunit PurQ (227 aa).

One can recognise a Glutamine amidotransferase type-1 domain in the interval 3-225 (FAVIVLPGSN…VKNWRDTHVT (223 aa)). The active-site Nucleophile is Cys86. Residues His194 and Glu196 contribute to the active site.

Part of the FGAM synthase complex composed of 1 PurL, 1 PurQ and 2 PurS subunits.

It localises to the cytoplasm. It carries out the reaction N(2)-formyl-N(1)-(5-phospho-beta-D-ribosyl)glycinamide + L-glutamine + ATP + H2O = 2-formamido-N(1)-(5-O-phospho-beta-D-ribosyl)acetamidine + L-glutamate + ADP + phosphate + H(+). The enzyme catalyses L-glutamine + H2O = L-glutamate + NH4(+). The protein operates within purine metabolism; IMP biosynthesis via de novo pathway; 5-amino-1-(5-phospho-D-ribosyl)imidazole from N(2)-formyl-N(1)-(5-phospho-D-ribosyl)glycinamide: step 1/2. Part of the phosphoribosylformylglycinamidine synthase complex involved in the purines biosynthetic pathway. Catalyzes the ATP-dependent conversion of formylglycinamide ribonucleotide (FGAR) and glutamine to yield formylglycinamidine ribonucleotide (FGAM) and glutamate. The FGAM synthase complex is composed of three subunits. PurQ produces an ammonia molecule by converting glutamine to glutamate. PurL transfers the ammonia molecule to FGAR to form FGAM in an ATP-dependent manner. PurS interacts with PurQ and PurL and is thought to assist in the transfer of the ammonia molecule from PurQ to PurL. This is Phosphoribosylformylglycinamidine synthase subunit PurQ from Bacillus pumilus (strain SAFR-032).